The sequence spans 221 residues: Translation initiation factor 6 (221 aa).

The protein belongs to the eIF-6 family.

In terms of biological role, binds to the 50S ribosomal subunit and prevents its association with the 30S ribosomal subunit to form the 70S initiation complex. The protein is Translation initiation factor 6 of Methanocella arvoryzae (strain DSM 22066 / NBRC 105507 / MRE50).